Here is an 876-residue protein sequence, read N- to C-terminus: DNA mismatch repair protein MutS (876 aa).

626–633 is an ATP binding site; sequence GPNMAGKS. The disordered stretch occupies residues 829 to 856; sequence FRAAPPPPAPAAPPKASQVEERLRAIQP. Pro residues predominate over residues 832–841; sequence APPPPAPAAP.

It belongs to the DNA mismatch repair MutS family.

This protein is involved in the repair of mismatches in DNA. It is possible that it carries out the mismatch recognition step. This protein has a weak ATPase activity. The chain is DNA mismatch repair protein MutS from Cereibacter sphaeroides (strain ATCC 17025 / ATH 2.4.3) (Rhodobacter sphaeroides).